The following is a 343-amino-acid chain: Multidrug resistance protein MdtN (343 aa).

At 1 to 12 (MESTPKKAPRSK) the chain is on the cytoplasmic side. The chain crosses the membrane as a helical; Signal-anchor for type II membrane protein span at residues 13–33 (FPALLVVALALVALVFVIWRV). The Periplasmic portion of the chain corresponds to 34-343 (DSAPSTNDAY…ASAVANLEPQ (310 aa)).

Belongs to the membrane fusion protein (MFP) (TC 8.A.1) family. Could be part of a tripartite efflux system composed of MdtN, MdtO and MdtP.

The protein localises to the cell inner membrane. Could be involved in resistance to puromycin, acriflavine and tetraphenylarsonium chloride. This is Multidrug resistance protein MdtN (mdtN) from Escherichia coli O6:H1 (strain CFT073 / ATCC 700928 / UPEC).